A 461-amino-acid polypeptide reads, in one-letter code: MTSRGRARASDRRARGAVVASGKIDFTDAGCFELPYAPVAEALLPEGPWKVVEGGVCAAKGFKVAGYKAGLRAKGTRADCALIVADEDATCAGIFTTNIMCAAPVTYCKKQLAGKPTARALLINAAQANAATGDQGAADAQATAEELSKSLGVAEEDILLMSTGVIGKRIKLDKLMPAIPILSANVESSTAAANAAATAICTTDLVRKTVAIEVQIGGKTVCMGGMAKGSGMIHPNMATMLGVVTCDADVTPEVWRNITSRAGAASFNQISVDGDTSTNDSLVCFASGKAGNAKITSVDSAEGKLLEQALTAVCRGLAKAIAWDGEGATCLIECNVSGAADDEDARVIARSVVCSSLAKAAIFGHDPNWGRLACAAGYAAPVKNRFDQNDLKLSLGPHQLMDKGQPLDFDAVAASRYLKEVTGVHGTCVVDISVGNGSGRGQAWGCDLSYDYVKINAEYTT.

6 residues coordinate substrate: T202, K228, T239, E326, N456, and T461. T239 functions as the Nucleophile in the catalytic mechanism.

This sequence belongs to the ArgJ family. Heterodimer of an alpha and a beta chain.

It localises to the plastid. It is found in the chloroplast. The catalysed reaction is N(2)-acetyl-L-ornithine + L-glutamate = N-acetyl-L-glutamate + L-ornithine. The enzyme catalyses L-glutamate + acetyl-CoA = N-acetyl-L-glutamate + CoA + H(+). It participates in amino-acid biosynthesis; L-arginine biosynthesis; L-ornithine and N-acetyl-L-glutamate from L-glutamate and N(2)-acetyl-L-ornithine (cyclic): step 1/1. The protein operates within amino-acid biosynthesis; L-arginine biosynthesis; N(2)-acetyl-L-ornithine from L-glutamate: step 1/4. Its function is as follows. Catalyzes two activities which are involved in the cyclic version of arginine biosynthesis: the synthesis of acetylglutamate from glutamate and acetyl-CoA, and of ornithine by transacetylation between acetylornithine and glutamate. The chain is Arginine biosynthesis bifunctional protein ArgJ, chloroplastic from Ostreococcus lucimarinus (strain CCE9901).